The chain runs to 523 residues: Synaptotagmin-10 (523 aa).

Residues 1–55 lie on the Vesicular side of the membrane; that stretch reads MSFHKEDGVNSLCQKALHIVTELCFAGQVEWEKCSGIFPRDRGSQGGSSTDISVS. A cysteine motif region spans residues 13 to 35; the sequence is CQKALHIVTELCFAGQVEWEKCS. Residues 56-76 traverse the membrane as a helical segment; sequence LLAVVVSFCGLALLVVSLFVF. Over 77–523 the chain is Cytoplasmic; sequence WKLCWPCWKS…CPSPKPPSTP (447 aa). Position 136 is a phosphothreonine (Thr136). 2 C2 domains span residues 231–352 and 363–496; these read ICGK…TVWK and DLGE…THWH. Positions 262, 268, 320, 321, 322, 325, 328, 394, 400, 454, and 456 each coordinate Ca(2+).

It belongs to the synaptotagmin family. As to quaternary structure, homodimer; disulfide-linked via the cysteine motif. Can also form heterodimers with SYT3, SYT6, SYT7 and SYT9. The cofactor is Ca(2+).

It is found in the cytoplasmic vesicle. It localises to the secretory vesicle membrane. In terms of biological role, ca(2+) sensor specifically required for the Ca(2+)-dependent exocytosis of secretory vesicles containing IGF1 in neurons of the olfactory bulb. Exocytosis of IGF1 is required for sensory perception of smell. Not involved in Ca(2+)-dependent synaptic vesicle exocytosis. Acts through Ca(2+) and phospholipid binding to the C2 domain: Ca(2+) induces binding of the C2-domains to phospholipid membranes and to assembled SNARE-complexes; both actions contribute to triggering exocytosis. The polypeptide is Synaptotagmin-10 (SYT10) (Pongo abelii (Sumatran orangutan)).